The following is a 243-amino-acid chain: DNA repair protein RecO (243 aa).

It belongs to the RecO family.

Involved in DNA repair and RecF pathway recombination. The sequence is that of DNA repair protein RecO from Caulobacter vibrioides (strain NA1000 / CB15N) (Caulobacter crescentus).